The following is a 436-amino-acid chain: F-box/LRR-repeat protein 20 (436 aa).

In terms of domain architecture, F-box spans 22-68 (AVINKKLPKELLLRIFSFLDVVTLCRCAQVSRAWNVLALDGSNWQRI). LRR repeat units follow at residues 74-100 (QRDIEGRVVENISKRCGGFLRKLSLRG), 101-126 (CLGVGDNALRTFAQNCRNIEVLSLNG), 127-152 (CTKTTDATCTSLSKFCSKLRHLDLAS), 153-178 (CTSITNMSLKALSEGCPLLEQLNISW), 179-204 (CDQVTKDGIQALVRGCGGLKALFLKG), 205-230 (CTQLEDEALKYIGAHCPELVTLNLQT), 231-256 (CLQITDEGLITICRGCHKLQSLCASG), 257-282 (CSNITDAILNALGQNCPRLRILEVAR), 283-308 (CSQLTDVGFTTLARNCHELEKMDLEE), 309-334 (CVQITDSTLIQLSIHCPRLQVLSLSH), 335-363 (CELITDDGIRHLGNGACAHDQLEVIELDN), 364-388 (CPLITDASLEHLKSCHSLERIELYD), and 389-414 (CQQITRAGIKRLRTHLPNIKVHAYFA). Phosphothreonine is present on Thr-417. Phosphoserine is present on Ser-421.

As to quaternary structure, interacts with SKP1 and CUL1. As to expression, highly expressed in brain.

The protein resides in the cytoplasm. Functionally, substrate-recognition component of the SCF (SKP1-CUL1-F-box protein)-type E3 ubiquitin ligase complex. Isoform 3 regulates neural transmission by binding and ubiquitinating RIMS1, a modulator of presynaptic plasticity. The protein is F-box/LRR-repeat protein 20 (Fbxl20) of Mus musculus (Mouse).